Consider the following 335-residue polypeptide: MEGIDFNQIGVSFKGSGSYVPDQILTNQKISQKVDTSNEWIKSRTGISERRISSLGDNVNEMGYKAALTAIEMANWDIKTVDLIVLATSTPHDLFGSAPSIQAKLGAANAVAFDLTAACSGFLFALITTSQFLKGGSFKRAIVIGADQLSSFVDWNDRRSCILFGDGAGALAIEATNQFDNLIGFDMRTDGERGSFLNLPSKNNKDLIIDNIDFLSGAFSPIQMNGQEVYKFAVREVPIILEKLFNKTHYTSDEVDWLVLHQANQRILDSVGDRLKIPREKILSNLEKYGNTSAATIPLVIDEAIRSNRIKQNDIIATSGFGAGLSWGAALIKWG.

Residues C119 and H261 contribute to the active site. The ACP-binding stretch occupies residues 262–266 (QANQR). The active site involves N291.

The protein belongs to the thiolase-like superfamily. FabH family. In terms of assembly, homodimer.

It localises to the cytoplasm. It carries out the reaction malonyl-[ACP] + acetyl-CoA + H(+) = 3-oxobutanoyl-[ACP] + CO2 + CoA. Its pathway is lipid metabolism; fatty acid biosynthesis. Functionally, catalyzes the condensation reaction of fatty acid synthesis by the addition to an acyl acceptor of two carbons from malonyl-ACP. Catalyzes the first condensation reaction which initiates fatty acid synthesis and may therefore play a role in governing the total rate of fatty acid production. Possesses both acetoacetyl-ACP synthase and acetyl transacylase activities. Its substrate specificity determines the biosynthesis of branched-chain and/or straight-chain of fatty acids. This chain is Beta-ketoacyl-[acyl-carrier-protein] synthase III, found in Prochlorococcus marinus (strain MIT 9301).